A 263-amino-acid polypeptide reads, in one-letter code: Hydroxyethylthiazole kinase (263 aa).

M41 is a substrate binding site. 2 residues coordinate ATP: R117 and T163. Residue G190 participates in substrate binding.

Belongs to the Thz kinase family. Requires Mg(2+) as cofactor.

It carries out the reaction 5-(2-hydroxyethyl)-4-methylthiazole + ATP = 4-methyl-5-(2-phosphooxyethyl)-thiazole + ADP + H(+). The protein operates within cofactor biosynthesis; thiamine diphosphate biosynthesis; 4-methyl-5-(2-phosphoethyl)-thiazole from 5-(2-hydroxyethyl)-4-methylthiazole: step 1/1. Catalyzes the phosphorylation of the hydroxyl group of 4-methyl-5-beta-hydroxyethylthiazole (THZ). The chain is Hydroxyethylthiazole kinase from Exiguobacterium sp. (strain ATCC BAA-1283 / AT1b).